The following is a 621-amino-acid chain: Amino-acid acetyltransferase, mitochondrial (621 aa).

Residues 1–77 constitute a mitochondrion transit peptide; the sequence is MIPRAPPSTQ…RSYLASFGVQ (77 aa). Positions 213 to 233 are disordered; it reads PKPGSEEESEPGFSPPETHIY. One can recognise an N-acetyltransferase domain in the interval 424–600; that stretch reads LPIRVVRSVS…GSAGLSFIED (177 aa).

It belongs to the acetyltransferase family.

The protein localises to the mitochondrion. It carries out the reaction L-glutamate + acetyl-CoA = N-acetyl-L-glutamate + CoA + H(+). Its pathway is amino-acid biosynthesis; L-arginine biosynthesis; N(2)-acetyl-L-ornithine from L-glutamate: step 1/4. Functionally, N-acetylglutamate synthase involved in arginine biosynthesis. The sequence is that of Amino-acid acetyltransferase, mitochondrial (ARG2) from Coprinopsis cinerea (strain Okayama-7 / 130 / ATCC MYA-4618 / FGSC 9003) (Inky cap fungus).